The chain runs to 369 residues: Aminomethyltransferase (369 aa).

It belongs to the GcvT family. As to quaternary structure, the glycine cleavage system is composed of four proteins: P, T, L and H.

The catalysed reaction is N(6)-[(R)-S(8)-aminomethyldihydrolipoyl]-L-lysyl-[protein] + (6S)-5,6,7,8-tetrahydrofolate = N(6)-[(R)-dihydrolipoyl]-L-lysyl-[protein] + (6R)-5,10-methylene-5,6,7,8-tetrahydrofolate + NH4(+). In terms of biological role, the glycine cleavage system catalyzes the degradation of glycine. This chain is Aminomethyltransferase, found in Xanthomonas axonopodis pv. citri (strain 306).